The primary structure comprises 186 residues: D-glycero-beta-D-manno-heptose-1,7-bisphosphate 7-phosphatase (186 aa).

Asp9 (nucleophile) is an active-site residue. 2 residues coordinate Mg(2+): Asp9 and Asp11. Residues 9 to 11 (DRD), 17 to 20 (DHGY), and 51 to 54 (TNQS) each bind substrate. Asp11 acts as the Proton donor in catalysis. 4 residues coordinate Zn(2+): Cys90, His92, Cys105, and Cys107. 108 to 109 (RK) contacts substrate. The Mg(2+) site is built by Asp134 and Lys135. Lys135 is a substrate binding site.

This sequence belongs to the GmhB family. Monomer. Requires Mg(2+) as cofactor. Zn(2+) is required as a cofactor.

The protein resides in the cytoplasm. The catalysed reaction is D-glycero-beta-D-manno-heptose 1,7-bisphosphate + H2O = D-glycero-beta-D-manno-heptose 1-phosphate + phosphate. It participates in nucleotide-sugar biosynthesis; ADP-L-glycero-beta-D-manno-heptose biosynthesis; ADP-L-glycero-beta-D-manno-heptose from D-glycero-beta-D-manno-heptose 7-phosphate: step 2/4. It functions in the pathway bacterial outer membrane biogenesis; LPS core biosynthesis. In terms of biological role, converts the D-glycero-beta-D-manno-heptose 1,7-bisphosphate intermediate into D-glycero-beta-D-manno-heptose 1-phosphate by removing the phosphate group at the C-7 position in vitro. Also catalyzes the dephosphorylation of D-glycero-alpha-D-manno-heptose-1,7-bisphosphate in vitro. The protein is D-glycero-beta-D-manno-heptose-1,7-bisphosphate 7-phosphatase (gmhB) of Vibrio cholerae serotype O1 (strain ATCC 39315 / El Tor Inaba N16961).